A 487-amino-acid polypeptide reads, in one-letter code: Homeobox protein homothorax (487 aa).

Disordered stretches follow at residues Tyr25–His49, Asp210–Asn292, and Asn333–Arg369. In terms of domain architecture, MEIS N-terminal spans Gly127–Thr211. Composition is skewed to polar residues over residues Asn227–Ala237 and Asn333–Ala345. Positions Asn365–Met427 form a DNA-binding region, homeobox; TALE-type.

Belongs to the TALE/MEIS homeobox family. In terms of assembly, interacts with exd; required for nuclear translocation of exd. As to expression, in the wing disk, the expression is present in the regions corresponding to notum, wing hinge and ventral pleura. In the leg disk, the expression is in the periphery region, corresponding to the proximal segments of the legs. In the antennal disk, the expression is in all but the arista region. In the eye disk, the expression is strong in the anterior region surrounding the eye field, including the regions corresponding to ptilinum, ocellus and head capsules, and weak in the posterior and lateral margins of the eye disk. Expressed specifically in maturating inner photoreceptors of the DRA and maintained through adulthood.

Its subcellular location is the nucleus. In terms of biological role, all isoforms are required for patterning of the embryonic cuticle. Acts with exd to delimit the eye field and prevent inappropriate eye development. Isoforms that carry the homeodomain are required for proper localization of chordotonal organs within the peripheral nervous system and antennal identity; required to activate antennal-specific genes, such as sal and to repress the leg-like expression of dac. Necessary for the nuclear localization of the essential HOX cofactor, extradenticle (exd). Both necessary and sufficient for inner photoreceptors to adopt the polarization-sensitive 'dorsal rim area' (DRA) of the eye fate instead of the color-sensitive default state. This occurs by increasing rhabdomere size and uncoupling R7-R8 communication to allow both cells to express the same opsin rather than different ones as required for color vision. The protein is Homeobox protein homothorax of Drosophila melanogaster (Fruit fly).